Here is a 398-residue protein sequence, read N- to C-terminus: Lysophospholipid transporter LplT (398 aa).

The next 11 helical transmembrane spans lie at 17–37 (AVLVSQFFSAFADNALLFAIL), 52–72 (ILQIVFVLAYILLAPFVGQIA), 90–110 (LGAFTICLGYDPFLGYALVGV), 137–157 (GLMEASTIIAILTGSVVGGFL), 163–183 (AIALLVCALMYGIAVVANFFI), 226–246 (LFWGAGITLRFLLVLWVPVVL), 256–276 (ILNVMVAVGIIIGAGAAARFI), 285–305 (MPAGVLIGVMVVIFAVQHSIW), 309–329 (VLLIILGIFGGLFIVPLNALL), 352–372 (IAMLLMLGLYSLVIKIGVPVV), and 373–393 (TTGIGFGTLLALTITSLWIWN).

Belongs to the major facilitator superfamily. LplT (TC 2.A.1.42) family.

The protein resides in the cell inner membrane. Its function is as follows. Catalyzes the facilitated diffusion of 2-acyl-glycero-3-phosphoethanolamine (2-acyl-GPE) into the cell. The sequence is that of Lysophospholipid transporter LplT from Photorhabdus laumondii subsp. laumondii (strain DSM 15139 / CIP 105565 / TT01) (Photorhabdus luminescens subsp. laumondii).